A 447-amino-acid polypeptide reads, in one-letter code: Beta-glucuronosyltransferase GlcAT14A (447 aa).

Topologically, residues Met1–Lys33 are cytoplasmic. The helical; Signal-anchor for type II membrane protein transmembrane segment at Trp34–Thr54 threads the bilayer. Topologically, residues Thr55 to Lys447 are lumenal. 4 N-linked (GlcNAc...) asparagine glycosylation sites follow: Asn151, Asn200, Asn329, and Asn405.

It belongs to the glycosyltransferase 14 family.

It localises to the golgi apparatus membrane. Functionally, beta-glucuronosyltransferase involved in the biosynthesis of type II arabinogalactan (AG). Modifies both the beta-1,6-linked galactan and beta-1,3-linked galactan present in type II AG. Transfers glucuronate to beta-1,6-galactooligosaccharides with degrees of polymerization ranging from 3 to 11. Transfers glucuronate to beta-1,3-galactooligosaccharides with degrees of polymerization ranging from 5 to 7. The addition of glucuronate at the O6 position may terminate galactose chain extension. Required for cell elongation during seedling growth. The chain is Beta-glucuronosyltransferase GlcAT14A from Arabidopsis thaliana (Mouse-ear cress).